A 443-amino-acid polypeptide reads, in one-letter code: SAM50-like protein CG7639 (443 aa).

In terms of domain architecture, POTRA spans A23 to N101.

It belongs to the SAM50/omp85 family. As to quaternary structure, associates with the mitochondrial contact site and cristae organizing system (MICOS) complex (also known as MINOS or MitOS complex).

It localises to the mitochondrion outer membrane. May play a role in the maintenance of the structure of mitochondrial cristae. This Drosophila melanogaster (Fruit fly) protein is SAM50-like protein CG7639.